We begin with the raw amino-acid sequence, 400 residues long: Double C2-like domain-containing protein alpha (400 aa).

Residues 1–89 form an interaction with UNC13D and DYNLT1 region; the sequence is MRGRRGDRMT…DSYDSDDATA (89 aa). C2 domains follow at residues 89-211 and 251-384; these read ALGT…HFNI and ERGR…ERWH. Ca(2+) contacts are provided by Asp-120, Asp-126, Asp-181, Asp-183, Asp-282, Asp-288, Asp-342, Asp-344, and Asp-350. The tract at residues 215–400 is interaction with UNC13D; sequence RQVPLASPSS…PPAAGALSSA (186 aa).

In terms of assembly, interacts (via N-terminus) with UNC13A. Interacts with cytoplasmic dynein light chain DYNLT1. Interacts with UNC13D. It depends on Ca(2+) as a cofactor. In terms of tissue distribution, predominantly expressed in brain. Also expressed in testis.

The protein resides in the lysosome. It is found in the cytoplasmic vesicle. Its subcellular location is the secretory vesicle. It localises to the synaptic vesicle membrane. The protein localises to the synapse. The protein resides in the synaptosome. Functionally, calcium sensor which most probably regulates fusion of vesicles with membranes. Binds calcium and phospholipids. May be involved in calcium dependent neurotransmitter release through the interaction with UNC13A. May be involved in calcium-dependent spontaneous release of neurotransmitter in absence of action potentials in neuronal cells. Regulates Ca(2+)-dependent secretory lysosome exocytosis in mast cells. The chain is Double C2-like domain-containing protein alpha (DOC2A) from Homo sapiens (Human).